Here is a 289-residue protein sequence, read N- to C-terminus: Lipoyl synthase 2 (289 aa).

[4Fe-4S] cluster-binding residues include Cys-43, Cys-48, Cys-54, Cys-69, Cys-73, Cys-76, and Ser-282. Residues 55 to 271 (YAQKTATFLL…GAVARDLGFA (217 aa)) form the Radical SAM core domain.

The protein belongs to the radical SAM superfamily. Lipoyl synthase family. It depends on [4Fe-4S] cluster as a cofactor.

The protein localises to the cytoplasm. The enzyme catalyses [[Fe-S] cluster scaffold protein carrying a second [4Fe-4S](2+) cluster] + N(6)-octanoyl-L-lysyl-[protein] + 2 oxidized [2Fe-2S]-[ferredoxin] + 2 S-adenosyl-L-methionine + 4 H(+) = [[Fe-S] cluster scaffold protein] + N(6)-[(R)-dihydrolipoyl]-L-lysyl-[protein] + 4 Fe(3+) + 2 hydrogen sulfide + 2 5'-deoxyadenosine + 2 L-methionine + 2 reduced [2Fe-2S]-[ferredoxin]. It functions in the pathway protein modification; protein lipoylation via endogenous pathway; protein N(6)-(lipoyl)lysine from octanoyl-[acyl-carrier-protein]: step 2/2. Catalyzes the radical-mediated insertion of two sulfur atoms into the C-6 and C-8 positions of the octanoyl moiety bound to the lipoyl domains of lipoate-dependent enzymes, thereby converting the octanoylated domains into lipoylated derivatives. This is Lipoyl synthase 2 from Gloeobacter violaceus (strain ATCC 29082 / PCC 7421).